A 78-amino-acid chain; its full sequence is Acyl carrier protein (78 aa).

Residues 2-77 (STIEESVKSI…AAIDFIKESK (76 aa)) enclose the Carrier domain. Residue Ser-37 is modified to O-(pantetheine 4'-phosphoryl)serine.

This sequence belongs to the acyl carrier protein (ACP) family. Post-translationally, 4'-phosphopantetheine is transferred from CoA to a specific serine of apo-ACP by AcpS. This modification is essential for activity because fatty acids are bound in thioester linkage to the sulfhydryl of the prosthetic group.

The protein resides in the cytoplasm. The protein operates within lipid metabolism; fatty acid biosynthesis. Functionally, carrier of the growing fatty acid chain in fatty acid biosynthesis. In Wigglesworthia glossinidia brevipalpis, this protein is Acyl carrier protein.